The primary structure comprises 253 residues: MHTKRIIPCLDVKDGRVVKGINFKGIIDVGNPVDLAKHYNDQGADELVFLDITATHEKRGIMMRVVEEVAEQIFIPFTVGGGLSSLEDIKAILRAGADKVSLNSAAVKNKKLIKESAFYFGNQCIVLAIDGKKRRDNSGWNVVINGGRIDTGIDLLSWVEEVTKLGAGEILLTSMDADGTKNGFDLALTKAVSDITSVPVIASGGCGCLEDFYDVLKNNTSDAALAASLFHYDELTVKDVKKYLINKKIPIRV.

Catalysis depends on residues aspartate 11 and aspartate 130.

The protein belongs to the HisA/HisF family. Heterodimer of HisH and HisF.

It is found in the cytoplasm. It carries out the reaction 5-[(5-phospho-1-deoxy-D-ribulos-1-ylimino)methylamino]-1-(5-phospho-beta-D-ribosyl)imidazole-4-carboxamide + L-glutamine = D-erythro-1-(imidazol-4-yl)glycerol 3-phosphate + 5-amino-1-(5-phospho-beta-D-ribosyl)imidazole-4-carboxamide + L-glutamate + H(+). The protein operates within amino-acid biosynthesis; L-histidine biosynthesis; L-histidine from 5-phospho-alpha-D-ribose 1-diphosphate: step 5/9. Functionally, IGPS catalyzes the conversion of PRFAR and glutamine to IGP, AICAR and glutamate. The HisF subunit catalyzes the cyclization activity that produces IGP and AICAR from PRFAR using the ammonia provided by the HisH subunit. This Clostridium botulinum (strain Alaska E43 / Type E3) protein is Imidazole glycerol phosphate synthase subunit HisF.